A 169-amino-acid polypeptide reads, in one-letter code: Putative antitoxin Rv0268c (169 aa).

Residues methionine 1–glutamine 11 are compositionally biased toward basic residues. The disordered stretch occupies residues methionine 1 to arginine 35. Residues alanine 120–methionine 153 are a coiled coil.

This sequence belongs to the phD/YefM antitoxin family.

Its function is as follows. Putative antitoxin component of a type II toxin-antitoxin (TA) system; however the expected toxin coding sequence is not found adjacent to this gene. The polypeptide is Putative antitoxin Rv0268c (Mycobacterium tuberculosis (strain ATCC 25618 / H37Rv)).